The sequence spans 117 residues: Putative membrane protein insertion efficiency factor (117 aa).

This sequence belongs to the UPF0161 family.

The protein resides in the cell inner membrane. Could be involved in insertion of integral membrane proteins into the membrane. This chain is Putative membrane protein insertion efficiency factor, found in Helicobacter pylori (strain ATCC 700392 / 26695) (Campylobacter pylori).